The primary structure comprises 345 residues: D-fructose 1,6-bisphosphatase class 2/sedoheptulose 1,7-bisphosphatase (345 aa).

The Mn(2+) site is built by aspartate 33, glutamate 57, aspartate 97, and glutamate 100. Substrate is bound by residues 100–102 (EGT), tyrosine 131, 176–178 (RDR), and 198–200 (DGD). Glutamate 225 provides a ligand contact to Mn(2+).

The protein belongs to the FBPase class 2 family. As to quaternary structure, homotetramer. The cofactor is Mn(2+).

The enzyme catalyses beta-D-fructose 1,6-bisphosphate + H2O = beta-D-fructose 6-phosphate + phosphate. The catalysed reaction is D-sedoheptulose 1,7-bisphosphate + H2O = D-sedoheptulose 7-phosphate + phosphate. The protein operates within carbohydrate biosynthesis; Calvin cycle. In terms of biological role, catalyzes the hydrolysis of fructose 1,6-bisphosphate (Fru 1,6-P2) and sedoheptulose 1,7-bisphosphate (Sed 1,7-P2) to fructose 6-phosphate and sedoheptulose 7-phosphate, respectively. In Trichormus variabilis (strain ATCC 29413 / PCC 7937) (Anabaena variabilis), this protein is D-fructose 1,6-bisphosphatase class 2/sedoheptulose 1,7-bisphosphatase.